Consider the following 383-residue polypeptide: ATP phosphoribosyltransferase regulatory subunit (383 aa).

It belongs to the class-II aminoacyl-tRNA synthetase family. HisZ subfamily. As to quaternary structure, heteromultimer composed of HisG and HisZ subunits.

It is found in the cytoplasm. The protein operates within amino-acid biosynthesis; L-histidine biosynthesis; L-histidine from 5-phospho-alpha-D-ribose 1-diphosphate: step 1/9. In terms of biological role, required for the first step of histidine biosynthesis. May allow the feedback regulation of ATP phosphoribosyltransferase activity by histidine. This is ATP phosphoribosyltransferase regulatory subunit from Cupriavidus pinatubonensis (strain JMP 134 / LMG 1197) (Cupriavidus necator (strain JMP 134)).